We begin with the raw amino-acid sequence, 248 residues long: 2,3-bisphosphoglycerate-dependent phosphoglycerate mutase (248 aa).

Substrate contacts are provided by residues 8–15 (RHGESQWN), 21–22 (TG), arginine 60, 87–90 (ERHY), lysine 98, 114–115 (RR), and 183–184 (GN). The active-site Tele-phosphohistidine intermediate is the histidine 9. The active-site Proton donor/acceptor is the glutamate 87.

Belongs to the phosphoglycerate mutase family. BPG-dependent PGAM subfamily. In terms of assembly, homodimer.

The enzyme catalyses (2R)-2-phosphoglycerate = (2R)-3-phosphoglycerate. It participates in carbohydrate degradation; glycolysis; pyruvate from D-glyceraldehyde 3-phosphate: step 3/5. In terms of biological role, catalyzes the interconversion of 2-phosphoglycerate and 3-phosphoglycerate. In Teredinibacter turnerae (strain ATCC 39867 / T7901), this protein is 2,3-bisphosphoglycerate-dependent phosphoglycerate mutase.